We begin with the raw amino-acid sequence, 227 residues long: ATP synthase F(0) complex subunit a (227 aa).

6 consecutive transmembrane segments (helical) span residues 14-34, 69-89, 98-118, 132-152, 180-200, and 202-222; these read LFGI…FPAP, WGPY…LGLL, QLSV…IIGL, EGTP…SLFI, FVLL…LFLL, and LLEV…LSLY.

The protein belongs to the ATPase A chain family. As to quaternary structure, component of the ATP synthase complex composed at least of ATP5F1A/subunit alpha, ATP5F1B/subunit beta, ATP5MC1/subunit c (homooctomer), MT-ATP6/subunit a, MT-ATP8/subunit 8, ATP5ME/subunit e, ATP5MF/subunit f, ATP5MG/subunit g, ATP5MK/subunit k, ATP5MJ/subunit j, ATP5F1C/subunit gamma, ATP5F1D/subunit delta, ATP5F1E/subunit epsilon, ATP5PF/subunit F6, ATP5PB/subunit b, ATP5PD/subunit d, ATP5PO/subunit OSCP. ATP synthase complex consists of a soluble F(1) head domain (subunits alpha(3) and beta(3)) - the catalytic core - and a membrane F(0) domain - the membrane proton channel (subunits c, a, 8, e, f, g, k and j). These two domains are linked by a central stalk (subunits gamma, delta, and epsilon) rotating inside the F1 region and a stationary peripheral stalk (subunits F6, b, d, and OSCP). Interacts with DNAJC30; interaction is direct.

It localises to the mitochondrion inner membrane. It catalyses the reaction H(+)(in) = H(+)(out). Subunit a, of the mitochondrial membrane ATP synthase complex (F(1)F(0) ATP synthase or Complex V) that produces ATP from ADP in the presence of a proton gradient across the membrane which is generated by electron transport complexes of the respiratory chain. ATP synthase complex consist of a soluble F(1) head domain - the catalytic core - and a membrane F(1) domain - the membrane proton channel. These two domains are linked by a central stalk rotating inside the F(1) region and a stationary peripheral stalk. During catalysis, ATP synthesis in the catalytic domain of F(1) is coupled via a rotary mechanism of the central stalk subunits to proton translocation. With the subunit c (ATP5MC1), forms the proton-conducting channel in the F(0) domain, that contains two crucial half-channels (inlet and outlet) that facilitate proton movement from the mitochondrial intermembrane space (IMS) into the matrix. Protons are taken up via the inlet half-channel and released through the outlet half-channel, following a Grotthuss mechanism. The sequence is that of ATP synthase F(0) complex subunit a from Tetraodon nigroviridis (Spotted green pufferfish).